The chain runs to 49 residues: Osteocalcin (49 aa).

The region spanning 1-47 (YLDHGLGAPAPYVDPLEPKREVCELNPDCDELADQMGFQEAYRRFYG) is the Gla domain. Proline 9 is subject to 4-hydroxyproline. Ca(2+)-binding residues include glutamate 17, glutamate 21, glutamate 24, and aspartate 30. 4-carboxyglutamate is present on residues glutamate 17, glutamate 21, and glutamate 24. Cysteine 23 and cysteine 29 are disulfide-bonded.

This sequence belongs to the osteocalcin/matrix Gla protein family. Gamma-carboxyglutamic acid residues are formed by vitamin K dependent carboxylation. These residues are essential for the binding of calcium.

It is found in the secreted. Its function is as follows. The carboxylated form is one of the main organic components of the bone matrix, which constitutes 1-2% of the total bone protein: it acts as a negative regulator of bone formation and is required to limit bone formation without impairing bone resorption or mineralization. The carboxylated form binds strongly to apatite and calcium. The uncarboxylated form acts as a hormone secreted by osteoblasts, which regulates different cellular processes, such as energy metabolism, male fertility and brain development. Regulates of energy metabolism by acting as a hormone favoring pancreatic beta-cell proliferation, insulin secretion and sensitivity and energy expenditure. Uncarboxylated osteocalcin hormone also promotes testosterone production in the testes: acts as a ligand for G protein-coupled receptor GPRC6A at the surface of Leydig cells, initiating a signaling response that promotes the expression of enzymes required for testosterone synthesis in a CREB-dependent manner. Also acts as a regulator of brain development: osteocalcin hormone crosses the blood-brain barrier and acts as a ligand for GPR158 on neurons, initiating a signaling response that prevents neuronal apoptosis in the hippocampus, favors the synthesis of all monoamine neurotransmitters and inhibits that of gamma-aminobutyric acid (GABA). Osteocalcin also crosses the placenta during pregnancy and maternal osteocalcin is required for fetal brain development. This is Osteocalcin from Lama guanicoe (Guanaco).